The following is a 412-amino-acid chain: 1-deoxy-D-xylulose 5-phosphate reductoisomerase (412 aa).

Residues T5, G6, S7, I8, G31, R32, N33, and N125 each coordinate NADPH. K126 contacts 1-deoxy-D-xylulose 5-phosphate. E127 contributes to the NADPH binding site. A Mn(2+)-binding site is contributed by D151. 1-deoxy-D-xylulose 5-phosphate contacts are provided by S152, E153, S189, and H212. Position 153 (E153) interacts with Mn(2+). G218 is an NADPH binding site. S225, N230, K231, and E234 together coordinate 1-deoxy-D-xylulose 5-phosphate. Residue E234 participates in Mn(2+) binding.

This sequence belongs to the DXR family. The cofactor is Mg(2+). Mn(2+) serves as cofactor.

It catalyses the reaction 2-C-methyl-D-erythritol 4-phosphate + NADP(+) = 1-deoxy-D-xylulose 5-phosphate + NADPH + H(+). Its pathway is isoprenoid biosynthesis; isopentenyl diphosphate biosynthesis via DXP pathway; isopentenyl diphosphate from 1-deoxy-D-xylulose 5-phosphate: step 1/6. In terms of biological role, catalyzes the NADPH-dependent rearrangement and reduction of 1-deoxy-D-xylulose-5-phosphate (DXP) to 2-C-methyl-D-erythritol 4-phosphate (MEP). The chain is 1-deoxy-D-xylulose 5-phosphate reductoisomerase from Prochlorococcus marinus (strain SARG / CCMP1375 / SS120).